The sequence spans 622 residues: SLAIN motif-containing protein-like (622 aa).

Positions 34-60 (DLKEVQKLHELVKRLEIQNQQLKIKRN) form a coiled coil. 2 disordered regions span residues 404-441 (HRYS…IQNH) and 473-622 (VRSS…DGCY). The segment covering 405 to 415 (RYSPSPLSSPR) has biased composition (low complexity). Composition is skewed to polar residues over residues 416–430 (CQSP…TTSR), 484–502 (QGPS…STPP), 525–591 (VSTS…STVP), and 599–611 (SRRS…MNST).

Belongs to the SLAIN motif-containing family.

The polypeptide is SLAIN motif-containing protein-like (Xenopus tropicalis (Western clawed frog)).